Consider the following 352-residue polypeptide: UPF0324 membrane protein RA0957 (352 aa).

10 helical membrane passes run V24–F43, Y48–S67, L104–V126, L136–V158, L169–A191, S201–S223, I235–A257, G272–G294, S301–V318, and H328–Y350.

Belongs to the UPF0324 family.

Its subcellular location is the cell membrane. The polypeptide is UPF0324 membrane protein RA0957 (Rhizobium meliloti (strain 1021) (Ensifer meliloti)).